The sequence spans 325 residues: MIARIWSGESPLWRLLLPLSWLYGLVSGGIRLCYRLGIKRAWRAPVPVVVVGNLTAGGNGKTPVVIWLVEQLQQRGIRVGVVSRGYGGKAASYPLLLTPQTSSAEAGDEPVLIYQRTGAPVAVSPVRSDAVKAILARHDVQIIVTDDGLQHYRLARDIEIVVIDGVRRFGNGWWLPAGPMRERASRLKSVDAVIVNGGVARPGEIPMQLAPGLAVNLCTGERRHVAELSNIVAMAGIGHPPRFFATLEACGASLQKCVPLADHQSLAFNDVKALVTDGQTLVMTEKDAVKCRGFAEDNWWYLPVDARLSGEQPDALLEQLISLAR.

ATP is bound at residue 55 to 62 (TAGGNGKT).

It belongs to the LpxK family.

It catalyses the reaction a lipid A disaccharide + ATP = a lipid IVA + ADP + H(+). It participates in glycolipid biosynthesis; lipid IV(A) biosynthesis; lipid IV(A) from (3R)-3-hydroxytetradecanoyl-[acyl-carrier-protein] and UDP-N-acetyl-alpha-D-glucosamine: step 6/6. Transfers the gamma-phosphate of ATP to the 4'-position of a tetraacyldisaccharide 1-phosphate intermediate (termed DS-1-P) to form tetraacyldisaccharide 1,4'-bis-phosphate (lipid IVA). The sequence is that of Tetraacyldisaccharide 4'-kinase from Citrobacter koseri (strain ATCC BAA-895 / CDC 4225-83 / SGSC4696).